The chain runs to 1942 residues: Myosin-1 (1942 aa).

The Myosin N-terminal SH3-like domain occupies 33 to 82; the sequence is DAKSSVFVVDAKESFVKATVQSREGGKVTAKTEGGTTVTVKDDQVYPMNP. Phosphoserine is present on serine 36. Phosphothreonine is present on residues threonine 64 and threonine 69. The 700-residue stretch at 86-785 folds into the Myosin motor domain; that stretch reads DKIEDMAMMT…LLGLLEEMRD (700 aa). Position 130 is an N6,N6,N6-trimethyllysine (lysine 130). 179–186 contacts ATP; sequence GESGAGKT. Tyrosine 389 carries the post-translational modification Phosphotyrosine. The residue at position 419 (threonine 419) is a Phosphothreonine. The residue at position 424 (tyrosine 424) is a Phosphotyrosine. Residue serine 625 is modified to Phosphoserine. The tract at residues 662–684 is actin-binding; sequence LNKLMTNLRSTHPHFVRCIIPNE. Pros-methylhistidine is present on histidine 760. An actin-binding region spans residues 764-778; it reads KFGHTKVFFKAGLLG. The IQ domain occupies 788 to 817; the sequence is LAQLITRTQAMCRGYLARVEYQKMVERRES. Residues 846–1942 are a coiled coil; it reads LLKSAETEKE…EVHTKIISEE (1097 aa). Serine 1095, serine 1099, serine 1165, serine 1240, and serine 1246 each carry phosphoserine. The segment at 1156 to 1175 is disordered; sequence RLEEAGGATSAQIEMNKKRE. A Phosphothreonine modification is found at threonine 1258. Position 1264 is a phosphoserine (serine 1264). Phosphothreonine occurs at positions 1268 and 1289. Residues serine 1291, serine 1295, serine 1306, and serine 1309 each carry the phosphoserine modification. Tyrosine 1467 carries the phosphotyrosine modification. Threonine 1470 carries the phosphothreonine modification. Serine 1477 carries the post-translational modification Phosphoserine. Tyrosine 1495 is modified (phosphotyrosine). Phosphoserine is present on serine 1498. The residue at position 1504 (threonine 1504) is a Phosphothreonine. Serine 1517 carries the phosphoserine modification. Position 1520 is a phosphothreonine (threonine 1520). 7 positions are modified to phosphoserine: serine 1545, serine 1557, serine 1577, serine 1603, serine 1606, serine 1717, and serine 1729. A phosphothreonine mark is found at threonine 1733 and threonine 1739. Serine 1742 carries the post-translational modification Phosphoserine.

The protein belongs to the TRAFAC class myosin-kinesin ATPase superfamily. Myosin family. Muscle myosin is a hexameric protein that consists of 2 heavy chain subunits (MHC), 2 alkali light chain subunits (MLC) and 2 regulatory light chain subunits (MLC-2). Interacts with SLC26A5. Expressed in the cochlea (at protein level). Strongly expressed in spiral ganglion neurons with axonal sprouts and supporting cells around hair cells. In the organ of Corti, it is expressed in inner and outer hair cells, and in supporting cells.

Its subcellular location is the cytoplasm. The protein resides in the myofibril. Its function is as follows. Required for normal hearing. It plays a role in cochlear amplification of auditory stimuli, likely through the positive regulation of prestin (SLC26A5) activity and outer hair cell (OHC) electromotility. This Mus musculus (Mouse) protein is Myosin-1.